The primary structure comprises 193 residues: NADH-quinone oxidoreductase subunit B (193 aa).

Cys49, Cys50, Cys115, and Cys144 together coordinate [4Fe-4S] cluster. The tract at residues 172–193 is disordered; it reads FKKEEPREANAPVPVNTEMPLE.

The protein belongs to the complex I 20 kDa subunit family. NDH-1 is composed of 14 different subunits. Subunits NuoB, C, D, E, F, and G constitute the peripheral sector of the complex. Requires [4Fe-4S] cluster as cofactor.

It localises to the cell inner membrane. The enzyme catalyses a quinone + NADH + 5 H(+)(in) = a quinol + NAD(+) + 4 H(+)(out). In terms of biological role, NDH-1 shuttles electrons from NADH, via FMN and iron-sulfur (Fe-S) centers, to quinones in the respiratory chain. The immediate electron acceptor for the enzyme in this species is believed to be ubiquinone. Couples the redox reaction to proton translocation (for every two electrons transferred, four hydrogen ions are translocated across the cytoplasmic membrane), and thus conserves the redox energy in a proton gradient. In Akkermansia muciniphila (strain ATCC BAA-835 / DSM 22959 / JCM 33894 / BCRC 81048 / CCUG 64013 / CIP 107961 / Muc), this protein is NADH-quinone oxidoreductase subunit B.